A 108-amino-acid chain; its full sequence is Movement protein (108 aa).

Residues 1-25 (MDASSQYSALPYPQPPRVPSAAPSA) are disordered. A helical transmembrane segment spans residues 35–55 (EIVIFTFVSVLALYLLWLWVL). Residues 73–108 (LIFGPGERPPVASADGSRPVPDPSPPVRRDLDLSRV) form a disordered region. The span at 99–108 (VRRDLDLSRV) shows a compositional bias: basic and acidic residues.

Belongs to the mastrevirus movement protein family. Interacts with the capsid protein (CP). Part of a MP-CP-viral DNA complex.

The protein localises to the host membrane. Involved in the viral transport within, and between cells. This chain is Movement protein, found in Megathyrsus maximus (PanSV).